The following is a 370-amino-acid chain: Sensor histidine kinase DesK (370 aa).

Residues 1-10 are Extracellular-facing; it reads MIKNHFTFQK. A helical transmembrane segment spans residues 11–31; the sequence is LNGITPYIWTIFFILPFYFIW. Over 32-36 the chain is Cytoplasmic; that stretch reads KSSST. A helical membrane pass occupies residues 37–57; the sequence is FVIIVGIILTLLFFSVYRFAF. Residues 58 to 70 are Extracellular-facing; sequence VSKGWTIYLWGFL. A helical transmembrane segment spans residues 71 to 91; sequence LIGISTASITLFSYIYFAFFI. The Cytoplasmic portion of the chain corresponds to 92-103; that stretch reads AYFIGNIKERVP. A helical membrane pass occupies residues 104–124; sequence FHILYYVHLISAAVAANFSLV. Residues 125 to 128 are Extracellular-facing; that stretch reads LKKE. Residues 129-149 traverse the membrane as a helical segment; it reads FFLTQIPFVVITLISAILLPF. Residues 150–370 are Cytoplasmic-facing; that stretch reads SIKSRKERER…LTMAIPNNSK (221 aa). The Histidine kinase domain occupies 186–369; that stretch reads DLHDTLGQKL…KLTMAIPNNS (184 aa). Histidine 188 bears the Phosphohistidine; by autocatalysis mark.

The protein localises to the cell membrane. The enzyme catalyses ATP + protein L-histidine = ADP + protein N-phospho-L-histidine.. Functionally, member of the two-component regulatory system DesR/DesK, responsible for cold induction of the des gene coding for the Delta5 acyl-lipid desaturase. Acts as a sensor of the membrane fluidity. Probably activates DesR by phosphorylation. This Bacillus subtilis (strain 168) protein is Sensor histidine kinase DesK (desK).